A 382-amino-acid polypeptide reads, in one-letter code: Galactokinase (382 aa).

Residue 34–37 (EHTD) participates in substrate binding. 124 to 130 (GAGLSSS) serves as a coordination point for ATP. Mg(2+) is bound by residues Ser130 and Glu162. The active-site Proton acceptor is the Asp174. Tyr223 lines the substrate pocket.

It belongs to the GHMP kinase family. GalK subfamily.

Its subcellular location is the cytoplasm. The enzyme catalyses alpha-D-galactose + ATP = alpha-D-galactose 1-phosphate + ADP + H(+). It participates in carbohydrate metabolism; galactose metabolism. Its function is as follows. Catalyzes the transfer of the gamma-phosphate of ATP to D-galactose to form alpha-D-galactose-1-phosphate (Gal-1-P). In Aeromonas hydrophila subsp. hydrophila (strain ATCC 7966 / DSM 30187 / BCRC 13018 / CCUG 14551 / JCM 1027 / KCTC 2358 / NCIMB 9240 / NCTC 8049), this protein is Galactokinase.